Reading from the N-terminus, the 388-residue chain is Large ribosomal subunit protein uL3A (388 aa).

Positions 1 to 10 (MSHCKFEQPR) are enriched in basic and acidic residues. The segment at 1 to 34 (MSHCKFEQPRHGSLGFLPRKRASRQRGKVKAFPK) is disordered. Serine 13 is modified (phosphoserine). Positions 18 to 31 (PRKRASRQRGKVKA) are enriched in basic residues. A phosphoserine mark is found at serine 65, serine 140, serine 143, serine 207, serine 295, and serine 355. Threonine 372 is subject to Phosphothreonine.

This sequence belongs to the universal ribosomal protein uL3 family. Component of the large ribosomal subunit (LSU). Mature yeast ribosomes consist of a small (40S) and a large (60S) subunit. The 40S small subunit contains 1 molecule of ribosomal RNA (18S rRNA) and at least 33 different proteins. The large 60S subunit contains 3 rRNA molecules (25S, 5.8S and 5S rRNA) and at least 46 different proteins. uL3 forms together with ES39L one of the contact sites for the signal recognition particle that targets ribosomes to the endoplasmic reticulum membrane.

It localises to the cytoplasm. Its function is as follows. Component of the ribosome, a large ribonucleoprotein complex responsible for the synthesis of proteins in the cell. The small ribosomal subunit (SSU) binds messenger RNAs (mRNAs) and translates the encoded message by selecting cognate aminoacyl-transfer RNA (tRNA) molecules. The large subunit (LSU) contains the ribosomal catalytic site termed the peptidyl transferase center (PTC), which catalyzes the formation of peptide bonds, thereby polymerizing the amino acids delivered by tRNAs into a polypeptide chain. The nascent polypeptides leave the ribosome through a tunnel in the LSU and interact with protein factors that function in enzymatic processing, targeting, and the membrane insertion of nascent chains at the exit of the ribosomal tunnel. uL3 plays a role in coordinating processes of accommodating the aminoacyl-tRNA in the PTC. This Schizosaccharomyces pombe (strain 972 / ATCC 24843) (Fission yeast) protein is Large ribosomal subunit protein uL3A (rpl301).